The following is a 215-amino-acid chain: Probable nicotinate-nucleotide adenylyltransferase (215 aa).

Belongs to the NadD family.

It catalyses the reaction nicotinate beta-D-ribonucleotide + ATP + H(+) = deamido-NAD(+) + diphosphate. It participates in cofactor biosynthesis; NAD(+) biosynthesis; deamido-NAD(+) from nicotinate D-ribonucleotide: step 1/1. Catalyzes the reversible adenylation of nicotinate mononucleotide (NaMN) to nicotinic acid adenine dinucleotide (NaAD). This Shewanella sp. (strain W3-18-1) protein is Probable nicotinate-nucleotide adenylyltransferase.